Here is a 1322-residue protein sequence, read N- to C-terminus: Transcription elongation factor SPT6-like (1322 aa).

Basic and acidic residues predominate over residues 1–17 (MNRIDEEPQIHEDPVEN). Disordered stretches follow at residues 1-65 (MNRI…KKDE) and 90-113 (KRLK…DLSH). The span at 18–33 (REEDDEDEDDQYEFDD) shows a compositional bias: acidic residues. A compositionally biased stretch (basic and acidic residues) spans 48-65 (EQRHCSEKKSRSRRKKDE). Positions 97–110 (EEEDKINNDDDDDD) are enriched in acidic residues. Positions 1017 to 1088 (GRIVQATVKK…QRYHVLLVCK (72 aa)) constitute an S1 motif domain.

The protein belongs to the SPT6 family.

The protein resides in the nucleus. Its function is as follows. Transcription elongation factor that enhances the transcription elongation by RNA polymerase II (RNAPII). The chain is Transcription elongation factor SPT6-like from Arabidopsis thaliana (Mouse-ear cress).